The chain runs to 162 residues: Troponin C, skeletal muscle (162 aa).

N-acetylalanine is present on alanine 1. EF-hand domains lie at 17–52, 53–88, 93–128, and 129–162; these read EMIA…LGQT, PTKE…QMKE, KSEE…SGES, and ITDE…EGVQ. Ca(2+)-binding residues include aspartate 30, aspartate 32, aspartate 36, glutamate 41, aspartate 66, aspartate 68, serine 70, threonine 72, glutamate 77, aspartate 106, asparagine 108, aspartate 110, tyrosine 112, glutamate 117, aspartate 142, asparagine 144, aspartate 146, lysine 148, and glutamate 153.

It belongs to the troponin C family.

Functionally, troponin is the central regulatory protein of striated muscle contraction. Tn consists of three components: Tn-I which is the inhibitor of actomyosin ATPase, Tn-T which contains the binding site for tropomyosin and Tn-C. The binding of calcium to Tn-C abolishes the inhibitory action of Tn on actin filaments. This is Troponin C, skeletal muscle from Pelophylax lessonae (Pool frog).